The following is a 286-amino-acid chain: MMRILLFLATNMAVLVVFNIILSLTGIQAQDATGLLLMAALFGFSGSLISLFLSKTMALRAVGAEVIKQPRNDMERWLVNTVRSQAERANLPMPDVAIYHSEDVNAFATGPSKNNSLVAVSTGLLRAMTQDEAEAVLAHEVAHIKNGDMVTMTLLQGVLNTFVIFVSRMIAKVVSSNRDGESSTGIYFLVSMVLEILFGFLASMIAMWFSRYREFRADAGSAKLVGKHKMIAALQRLQRLHEPQELEGQLAAFAINGKRGGLAALFMSHPPLEKRIAALQQLDSFK.

2 helical membrane passes run Ile4–Leu24 and Thr33–Leu53. Zn(2+) is bound at residue His139. Glu140 is an active-site residue. His143 is a binding site for Zn(2+). A run of 2 helical transmembrane segments spans residues Gly147–Ser167 and Ile186–Ala206. Glu214 is a binding site for Zn(2+).

This sequence belongs to the peptidase M48B family. Zn(2+) is required as a cofactor.

It localises to the cell inner membrane. This chain is Protease HtpX, found in Pasteurella multocida (strain Pm70).